A 60-amino-acid polypeptide reads, in one-letter code: Bowman-Birk type proteinase inhibitor C1 (60 aa).

4 disulfides stabilise this stretch: Cys5-Cys21, Cys11-Cys19, Cys28-Cys35, and Cys32-Cys49.

It belongs to the Bowman-Birk serine protease inhibitor family. In terms of tissue distribution, expressed in bulb (at protein level).

In terms of biological role, serine protease inhibitor. Strongly inhibits trypsin (Ki = 0.22 nM) and very weakly inhibits chymotrypsin (Ki = 1200 nM). Does not inhibit bacterial subtilisin. The polypeptide is Bowman-Birk type proteinase inhibitor C1 (Hyacinthus orientalis (Common hyacinth)).